The primary structure comprises 519 residues: Aldehyde dehydrogenase X, mitochondrial (519 aa).

The transit peptide at 1–19 (MLNARFLVPRLLCLQGRTT) directs the protein to the mitochondrion. K53 is subject to N6-acetyllysine. K54 is subject to N6-acetyllysine; alternate. At K54 the chain carries N6-succinyllysine; alternate. An NAD(+)-binding site is contributed by 264–269 (GSTEVG). Residue E287 is the Proton acceptor of the active site. Residue C321 is the Nucleophile of the active site. N6-acetyllysine; alternate is present on residues K366, K385, K401, and K428. Residues K366, K385, K401, and K428 each carry the N6-succinyllysine; alternate modification. An N6-acetyllysine modification is found at K431.

It belongs to the aldehyde dehydrogenase family. In terms of assembly, homotetramer.

It localises to the mitochondrion matrix. It catalyses the reaction an aldehyde + NAD(+) + H2O = a carboxylate + NADH + 2 H(+). Its pathway is alcohol metabolism; ethanol degradation; acetate from ethanol: step 2/2. Its function is as follows. ALDHs play a major role in the detoxification of alcohol-derived acetaldehyde. They are involved in the metabolism of corticosteroids, biogenic amines, neurotransmitters, and lipid peroxidation. This chain is Aldehyde dehydrogenase X, mitochondrial (Aldh1b1), found in Rattus norvegicus (Rat).